The following is a 112-amino-acid chain: Probable 4-amino-4-deoxy-L-arabinose-phosphoundecaprenol flippase subunit ArnE (112 aa).

The 76-residue stretch at 35-110 folds into the EamA domain; it reads RHILFWLGMA…IVVGIVILGT (76 aa). Transmembrane regions (helical) follow at residues 37 to 57, 66 to 86, and 89 to 109; these read ILFW…LWLS, IAYP…WGIW, and PVAR…VILG.

It belongs to the ArnE family. Heterodimer of ArnE and ArnF.

It localises to the cell inner membrane. It functions in the pathway bacterial outer membrane biogenesis; lipopolysaccharide biosynthesis. Translocates 4-amino-4-deoxy-L-arabinose-phosphoundecaprenol (alpha-L-Ara4N-phosphoundecaprenol) from the cytoplasmic to the periplasmic side of the inner membrane. This Klebsiella pneumoniae (strain 342) protein is Probable 4-amino-4-deoxy-L-arabinose-phosphoundecaprenol flippase subunit ArnE.